The primary structure comprises 713 residues: Zinc finger and BTB domain-containing protein 1 (713 aa).

Lysine 3 is covalently cross-linked (Glycyl lysine isopeptide (Lys-Gly) (interchain with G-Cter in SUMO2)). The BTB domain maps to 24–91 (CDCCIAIDDI…MYLGKIMTAP (68 aa)). Residues lysine 200 and lysine 205 each participate in a glycyl lysine isopeptide (Lys-Gly) (interchain with G-Cter in SUMO2) cross-link. The C2H2-type 1; atypical zinc finger occupies 216–242 (FTCDSCGFGFSCEKLLDEHVLTCTNRH). Residues lysine 261, lysine 266, lysine 276, lysine 284, lysine 304, lysine 316, lysine 328, lysine 340, and lysine 346 each participate in a glycyl lysine isopeptide (Lys-Gly) (interchain with G-Cter in SUMO2) cross-link. Residues 270–319 (AEKDSSKTFSAQPDKYREDANQAPDDSASTTGSRKSTVEAGIAGEEKSRA) are disordered. Phosphoserine is present on serine 355. At threonine 356 the chain carries Phosphothreonine. Lysine 381 participates in a covalent cross-link: Glycyl lysine isopeptide (Lys-Gly) (interchain with G-Cter in SUMO2). The C2H2-type 2; atypical zinc-finger motif lies at 448 to 470 (CACGKCGQILVKGRQLQEHAQRC). A Glycyl lysine isopeptide (Lys-Gly) (interchain with G-Cter in SUMO2) cross-link involves residue lysine 528. The UBZ-type zinc-finger motif lies at 533–558 (PFRCPNCGQRFETENLVVEHMSSCLD). Lysine 563 participates in a covalent cross-link: Glycyl lysine isopeptide (Lys-Gly) (interchain with G-Cter in SUMO2). C2H2-type zinc fingers lie at residues 578–600 (HFCNLCGKGFYQRCHLREHYTVH), 606–628 (FVCQTCGKQFLRERQLRLHNDMH), 634–656 (YVCSICDQGNFRKHDHVRHMISH), 662–684 (TICQVCFQIFPNNEQLEQHMDVH), and 686–709 (YTCGICGAKFNLRKDMRSHYNAKH).

As to quaternary structure, homodimer. Homodimer. Interacts (via BTB domain) with TRIM28 (unphosphorylated or phosphorylated form). In terms of processing, sumoylated with SUMO2 at Lys-328 and to a lesser extent at Lys-266. Sumoylation inhibits its transcriptional repression activity and regulates its subcellular localization. In terms of tissue distribution, expressed strongly in thymus and spleen, less in lymph nodes and peripheral blood mononuclear cells (PBMCs) and weakly in bone marrow. Strongly expressed in immature, but weakly in mature bone marrow-lymphocyte B.

The protein localises to the nucleus. The protein resides in the nucleoplasm. Acts as a transcriptional repressor. Represses cAMP-responsive element (CRE)-mediated transcriptional activation. In addition, has a role in translesion DNA synthesis. Requires for UV-inducible RAD18 loading, PCNA monoubiquitination, POLH recruitment to replication factories and efficient translesion DNA synthesis. Plays a key role in the transcriptional regulation of T lymphocyte development. The chain is Zinc finger and BTB domain-containing protein 1 (Zbtb1) from Mus musculus (Mouse).